The sequence spans 1429 residues: Inactive rhomboid protein 1 (1429 aa).

Disordered regions lie at residues M1–R36, G560–P579, and T740–A766. Topologically, residues M1–T843 are cytoplasmic. Positions S22–S33 are enriched in low complexity. 2 stretches are compositionally biased toward polar residues: residues A564–N573 and T740–Q763. Residues V844 to G864 form a helical membrane-spanning segment. At S865 to S1099 the chain is on the lumenal side. The chain crosses the membrane as a helical span at residues L1100–L1120. Topologically, residues A1121–R1131 are cytoplasmic. The chain crosses the membrane as a helical span at residues T1132–P1152. Topologically, residues H1153 to E1156 are lumenal. Residues V1157 to M1177 form a helical membrane-spanning segment. Residues H1178–H1186 lie on the Cytoplasmic side of the membrane. A helical transmembrane segment spans residues I1187 to Y1207. Residues Q1208 to N1210 lie on the Lumenal side of the membrane. A helical transmembrane segment spans residues F1211–F1231. The Cytoplasmic segment spans residues T1232 to L1245. Residues I1246–I1266 form a helical membrane-spanning segment. Topologically, residues H1267 to L1429 are lumenal.

This sequence belongs to the peptidase S54 family. In terms of tissue distribution, specifically expressed in the nervous system and in brain.

Its subcellular location is the endoplasmic reticulum membrane. In terms of biological role, rhomboid protease-like protein which has no protease activity but regulates the secretion of several ligands of the epidermal growth factor receptor. Indirectly activates the epidermal growth factor receptor signaling pathway and may thereby regulate sleep, cell survival, proliferation and migration. In Drosophila melanogaster (Fruit fly), this protein is Inactive rhomboid protein 1 (rho-5).